Consider the following 706-residue polypeptide: Catalase HPII (706 aa).

Catalysis depends on residues His77 and Asn151. Tyr365 provides a ligand contact to heme. Residues 512–532 (EPPEEQVDESAPVSPALSQVT) are disordered.

Belongs to the catalase family. HPII subfamily. Heme is required as a cofactor.

It is found in the cytoplasm. The enzyme catalyses 2 H2O2 = O2 + 2 H2O. Functionally, decomposes hydrogen peroxide into water and oxygen; serves to protect cells from the toxic effects of hydrogen peroxide. In Mycobacterium avium, this protein is Catalase HPII (katE).